A 98-amino-acid chain; its full sequence is HssA/B-like protein 39 (98 aa).

The tract at residues 1–21 (MTLFSSISSMSTSMSGSKSSI) is disordered.

The protein belongs to the hssA/B family.

This is HssA/B-like protein 39 (hssl39) from Dictyostelium discoideum (Social amoeba).